The sequence spans 620 residues: Glutathione-regulated potassium-efflux system protein KefC (620 aa).

12 helical membrane passes run 4 to 24 (HTLMQALIYLGSAALIVPIAV), 26 to 46 (LGLGSVLGYLIAGCIIGPWGL), 54 to 74 (SILHFAEIGVVLMLFVIGLEL), 90 to 110 (GALQMVICGGLIGFFCMFLGL), 114 to 134 (VAELIGMTLALSSTAIAMQAM), 149 to 169 (FAVLLFQDIAAIPLVAMIPLL), 178 to 198 (LGAFALSALKVAGALALVVLL), 218 to 238 (VFSAVALFLVFGFGLLLEEVG), 270 to 290 (GLLLGLFFIGVGMSIDFGTLV), 294 to 314 (LRILLLLAGFLAIKIVMLWLI), 327 to 347 (WFAVLLGQGSEFAFVVFGAAQ), and 359 to 379 (ALTLAVALSMAATPIFLVLLT). Residues 399–518 (QPRVIVAGFG…AGVAMPERET (120 aa)) enclose the RCK N-terminal domain. Residues 599–620 (QGTAEGKHTGDIADEPQVKPST) form a disordered region.

This sequence belongs to the monovalent cation:proton antiporter 2 (CPA2) transporter (TC 2.A.37) family. KefC subfamily. As to quaternary structure, homodimer. Interacts with the regulatory subunit KefF.

The protein resides in the cell inner membrane. Pore-forming subunit of a potassium efflux system that confers protection against electrophiles. Catalyzes K(+)/H(+) antiport. The chain is Glutathione-regulated potassium-efflux system protein KefC from Salmonella arizonae (strain ATCC BAA-731 / CDC346-86 / RSK2980).